Consider the following 306-residue polypeptide: Aspartate carbamoyltransferase catalytic subunit (306 aa).

R53 and T54 together coordinate carbamoyl phosphate. K82 is a binding site for L-aspartate. Carbamoyl phosphate is bound by residues R103, H131, and Q134. Residues R164 and R226 each contribute to the L-aspartate site. Residues L263 and P264 each contribute to the carbamoyl phosphate site.

It belongs to the aspartate/ornithine carbamoyltransferase superfamily. ATCase family. As to quaternary structure, heterododecamer (2C3:3R2) of six catalytic PyrB chains organized as two trimers (C3), and six regulatory PyrI chains organized as three dimers (R2).

It carries out the reaction carbamoyl phosphate + L-aspartate = N-carbamoyl-L-aspartate + phosphate + H(+). It participates in pyrimidine metabolism; UMP biosynthesis via de novo pathway; (S)-dihydroorotate from bicarbonate: step 2/3. In terms of biological role, catalyzes the condensation of carbamoyl phosphate and aspartate to form carbamoyl aspartate and inorganic phosphate, the committed step in the de novo pyrimidine nucleotide biosynthesis pathway. In Methanocaldococcus jannaschii (strain ATCC 43067 / DSM 2661 / JAL-1 / JCM 10045 / NBRC 100440) (Methanococcus jannaschii), this protein is Aspartate carbamoyltransferase catalytic subunit.